A 137-amino-acid polypeptide reads, in one-letter code: MEQNNIKEQLISFFNQACSTHQERLDFICSTRESDTFSSVDVPLEPIKNIIEITKDENQQIEITKIAVNNIKTLSSVGATGQYMASFFSTNSEPAIIFCVIYFLYHFGFLKDNNKKQIIKKAYETIADNIADYLNEN.

This is an uncharacterized protein from Mycoplasma genitalium (strain ATCC 33530 / DSM 19775 / NCTC 10195 / G37) (Mycoplasmoides genitalium).